Reading from the N-terminus, the 246-residue chain is Probable S-methyl-5'-thioinosine phosphorylase (246 aa).

Phosphate is bound by residues Thr-10 and 52-53 (RH). Residue Met-185 coordinates substrate. Position 186 (Thr-186) interacts with phosphate. 209–211 (NPA) contributes to the substrate binding site.

Belongs to the PNP/MTAP phosphorylase family. MTAP subfamily. In terms of assembly, homotrimer.

It carries out the reaction S-methyl-5'-thioinosine + phosphate = 5-(methylsulfanyl)-alpha-D-ribose 1-phosphate + hypoxanthine. Its pathway is purine metabolism; purine nucleoside salvage. In terms of biological role, catalyzes the reversible phosphorylation of S-methyl-5'-thioinosine (MTI) to hypoxanthine and 5-methylthioribose-1-phosphate. Involved in the breakdown of S-methyl-5'-thioadenosine (MTA), a major by-product of polyamine biosynthesis. Catabolism of (MTA) occurs via deamination to MTI and phosphorolysis to hypoxanthine. The polypeptide is Probable S-methyl-5'-thioinosine phosphorylase (Pseudomonas syringae pv. tomato (strain ATCC BAA-871 / DC3000)).